Here is a 186-residue protein sequence, read N- to C-terminus: Tumor necrosis factor alpha-induced protein 8-like protein 2 (186 aa).

This sequence belongs to the TNFAIP8 family. TNFAIP8L2 subfamily.

Its function is as follows. Acts as a negative regulator of innate and adaptive immunity by maintaining immune homeostasis. Negative regulator of Toll-like receptor and T-cell receptor function. Prevents hyperresponsiveness of the immune system and maintains immune homeostasis. Inhibits jun/ap1 and NF-kappa-B activation. Promotes Fas-induced apoptosis. The chain is Tumor necrosis factor alpha-induced protein 8-like protein 2 (tnfaip8l2) from Xenopus laevis (African clawed frog).